We begin with the raw amino-acid sequence, 1390 residues long: DNA-directed RNA polymerase subunit beta (1390 aa).

This sequence belongs to the RNA polymerase beta chain family. As to quaternary structure, the RNAP catalytic core consists of 2 alpha, 1 beta, 1 beta' and 1 omega subunit. When a sigma factor is associated with the core the holoenzyme is formed, which can initiate transcription.

The catalysed reaction is RNA(n) + a ribonucleoside 5'-triphosphate = RNA(n+1) + diphosphate. DNA-dependent RNA polymerase catalyzes the transcription of DNA into RNA using the four ribonucleoside triphosphates as substrates. The sequence is that of DNA-directed RNA polymerase subunit beta from Methylobacillus flagellatus (strain ATCC 51484 / DSM 6875 / VKM B-1610 / KT).